Here is a 499-residue protein sequence, read N- to C-terminus: Glycolate oxidase subunit GlcD (499 aa).

One can recognise an FAD-binding PCMH-type domain in the interval 52-230 (YRTRPLLVVL…TEVTVKLLPK (179 aa)).

The protein belongs to the FAD-binding oxidoreductase/transferase type 4 family. The glycolate oxidase likely consists of three subunits, GlcD, GlcE and GlcF. FAD serves as cofactor.

It is found in the cell inner membrane. It catalyses the reaction glycolate + A = glyoxylate + AH2. The catalysed reaction is (R)-lactate + A = pyruvate + AH2. Component of a complex that catalyzes the oxidation of glycolate to glyoxylate. Is required for E.coli to grow on glycolate as a sole source of carbon. Is also able to oxidize D-lactate ((R)-lactate) with a similar rate. Does not link directly to O(2), and 2,6-dichloroindophenol (DCIP) and phenazine methosulfate (PMS) can act as artificial electron acceptors in vitro, but the physiological molecule that functions as a primary electron acceptor during glycolate oxidation is unknown. The polypeptide is Glycolate oxidase subunit GlcD (glcD) (Escherichia coli O6:H1 (strain CFT073 / ATCC 700928 / UPEC)).